A 161-amino-acid polypeptide reads, in one-letter code: Endoribonuclease YbeY (161 aa).

Residues H121, H125, and H131 each contribute to the Zn(2+) site.

This sequence belongs to the endoribonuclease YbeY family. The cofactor is Zn(2+).

The protein localises to the cytoplasm. Functionally, single strand-specific metallo-endoribonuclease involved in late-stage 70S ribosome quality control and in maturation of the 3' terminus of the 16S rRNA. This is Endoribonuclease YbeY from Stenotrophomonas maltophilia (strain R551-3).